A 73-amino-acid polypeptide reads, in one-letter code: Toxin Td12 (73 aa).

An N-terminal signal peptide occupies residues 1–7; sequence IGMVIEC. Positions 8–70 constitute an LCN-type CS-alpha/beta domain; that stretch reads KDGYLMEPNG…TWDRATNTCG (63 aa). 4 cysteine pairs are disulfide-bonded: Cys18–Cys69, Cys22–Cys44, Cys30–Cys50, and Cys34–Cys52. The residue at position 71 (Arg71) is an Arginine amide.

This sequence belongs to the long (4 C-C) scorpion toxin superfamily. Sodium channel inhibitor family. Beta subfamily. As to expression, expressed by the venom gland.

It localises to the secreted. Its function is as follows. Beta toxins bind voltage-independently at site-4 of sodium channels (Nav) and shift the voltage of activation toward more negative potentials thereby affecting sodium channel activation and promoting spontaneous and repetitive firing. In Tityus discrepans (Venezuelan scorpion), this protein is Toxin Td12.